The chain runs to 426 residues: Serine--tRNA ligase (426 aa).

The interval 103-129 (VPNLPDDSVPTGKDENDNPEIRRWGTP) is disordered. The segment covering 114 to 125 (GKDENDNPEIRR) has biased composition (basic and acidic residues). 230–232 (TAE) contacts L-serine. 261–263 (RSE) serves as a coordination point for ATP. Residue Glu284 participates in L-serine binding. Position 348–351 (348–351 (EISS)) interacts with ATP. Residue Ser384 coordinates L-serine.

Belongs to the class-II aminoacyl-tRNA synthetase family. Type-1 seryl-tRNA synthetase subfamily. As to quaternary structure, homodimer. The tRNA molecule binds across the dimer.

It localises to the cytoplasm. It carries out the reaction tRNA(Ser) + L-serine + ATP = L-seryl-tRNA(Ser) + AMP + diphosphate + H(+). The catalysed reaction is tRNA(Sec) + L-serine + ATP = L-seryl-tRNA(Sec) + AMP + diphosphate + H(+). It functions in the pathway aminoacyl-tRNA biosynthesis; selenocysteinyl-tRNA(Sec) biosynthesis; L-seryl-tRNA(Sec) from L-serine and tRNA(Sec): step 1/1. In terms of biological role, catalyzes the attachment of serine to tRNA(Ser). Is also able to aminoacylate tRNA(Sec) with serine, to form the misacylated tRNA L-seryl-tRNA(Sec), which will be further converted into selenocysteinyl-tRNA(Sec). The sequence is that of Serine--tRNA ligase from Dichelobacter nodosus (strain VCS1703A).